The primary structure comprises 161 residues: uncharacterized protein (161 aa).

The protein belongs to the SixA phosphatase family.

This is an uncharacterized protein from Mycobacterium leprae (strain TN).